A 574-amino-acid chain; its full sequence is Pescadillo homolog (574 aa).

Positions proline 289 to glutamate 312 are disordered. Over residues proline 292–alanine 303 the composition is skewed to acidic residues. One can recognise a BRCT domain in the interval lysine 323 to proline 416. The disordered stretch occupies residues leucine 452–asparagine 486. The span at glycine 453–glutamate 477 shows a compositional bias: acidic residues.

The protein belongs to the pescadillo family. In terms of assembly, component of the PeBoW complex, composed of bop1, pes1 and wdr12. The complex is held together by bop1, which interacts with pes1 via its N-terminal domain and with wdr12 via a high-affinity interaction between the seven-bladed beta-propeller domains of the 2 proteins. The PeBoW complex associates with the 66S pre-ribosome.

Its subcellular location is the nucleus. It is found in the nucleolus. The protein resides in the nucleoplasm. In terms of biological role, component of the PeBoW complex, which is required for maturation of 28S and 5.8S ribosomal RNAs and formation of the 60S ribosome. Required for neural crest migration and eye development. The protein is Pescadillo homolog (pes1) of Xenopus laevis (African clawed frog).